We begin with the raw amino-acid sequence, 396 residues long: Enoyl-[acyl-carrier-protein] reductase [NADH] (396 aa).

Residues 47–52 (GASTGF), 73–74 (FE), 110–111 (DA), and 138–139 (LA) contribute to the NAD(+) site. Y224 serves as a coordination point for substrate. Y234 functions as the Proton donor in the catalytic mechanism. NAD(+)-binding positions include K243 and 272–274 (LVT).

Belongs to the TER reductase family. In terms of assembly, monomer.

It catalyses the reaction a 2,3-saturated acyl-[ACP] + NAD(+) = a (2E)-enoyl-[ACP] + NADH + H(+). It participates in lipid metabolism; fatty acid biosynthesis. Involved in the final reduction of the elongation cycle of fatty acid synthesis (FAS II). Catalyzes the reduction of a carbon-carbon double bond in an enoyl moiety that is covalently linked to an acyl carrier protein (ACP). This chain is Enoyl-[acyl-carrier-protein] reductase [NADH], found in Flavobacterium psychrophilum (strain ATCC 49511 / DSM 21280 / CIP 103535 / JIP02/86).